The following is a 381-amino-acid chain: Secretion apparatus protein BsaZ (381 aa).

Helical transmembrane passes span 28–48 (IVAL…VDLT), 80–100 (IAAP…LVQS), 134–154 (AVKA…FADL), and 175–195 (IVLT…VLIV). Residues 343–381 (NRGGPPREMPPEATHAPDAHGGDAASGGATSAQAGERNA) are disordered. Low complexity predominate over residues 364–381 (GDAASGGATSAQAGERNA).

It belongs to the type III secretion exporter family.

It localises to the cell membrane. Functionally, part of the bsa type III secretion system, is involved in the intracellular replication of invading bacteria inside the host cell. Probably necessary for the lysis of the vacuole membrane and escape into the host cell cytoplasm. The polypeptide is Secretion apparatus protein BsaZ (bsaZ) (Burkholderia thailandensis (strain ATCC 700388 / DSM 13276 / CCUG 48851 / CIP 106301 / E264)).